We begin with the raw amino-acid sequence, 872 residues long: Alanine--tRNA ligase (872 aa).

Zn(2+) contacts are provided by histidine 567, histidine 571, cysteine 669, and histidine 673.

Belongs to the class-II aminoacyl-tRNA synthetase family. Zn(2+) is required as a cofactor.

It localises to the cytoplasm. The enzyme catalyses tRNA(Ala) + L-alanine + ATP = L-alanyl-tRNA(Ala) + AMP + diphosphate. In terms of biological role, catalyzes the attachment of alanine to tRNA(Ala) in a two-step reaction: alanine is first activated by ATP to form Ala-AMP and then transferred to the acceptor end of tRNA(Ala). Also edits incorrectly charged Ser-tRNA(Ala) and Gly-tRNA(Ala) via its editing domain. The protein is Alanine--tRNA ligase of Streptococcus mutans serotype c (strain ATCC 700610 / UA159).